We begin with the raw amino-acid sequence, 48 residues long: ATP synthase protein 8 (48 aa).

Residues 13-32 (LTYGFLLMITLLILFSQFFL) form a helical membrane-spanning segment.

This sequence belongs to the ATPase protein 8 family. F-type ATPases have 2 components, CF(1) - the catalytic core - and CF(0) - the membrane proton channel. In yeast, the dimeric form of ATP synthase consists of 17 polypeptides: alpha, beta, gamma, delta, epsilon, 4 (B), 5 (OSCP), 6 (A), 8, 9 (C), d, E (Tim11), f, g, h, i/j and k.

It is found in the mitochondrion membrane. Its function is as follows. Mitochondrial membrane ATP synthase (F(1)F(0) ATP synthase or Complex V) produces ATP from ADP in the presence of a proton gradient across the membrane which is generated by electron transport complexes of the respiratory chain. F-type ATPases consist of two structural domains, F(1) - containing the extramembraneous catalytic core and F(0) - containing the membrane proton channel, linked together by a central stalk and a peripheral stalk. During catalysis, ATP synthesis in the catalytic domain of F(1) is coupled via a rotary mechanism of the central stalk subunits to proton translocation. Part of the complex F(0) domain. Minor subunit located with subunit a in the membrane. This is ATP synthase protein 8 (ATP8) from Saccharomyces cerevisiae (strain ATCC 204508 / S288c) (Baker's yeast).